The following is a 356-amino-acid chain: Glutenin, low molecular weight subunit (356 aa).

Positions 1–19 (MKTFLVFALLALAAASAVA) are cleaved as a signal peptide. The tract at residues 20 to 179 (QISQQQQAPP…LQQQRPPFSR (160 aa)) is disordered.

This sequence belongs to the gliadin/glutenin family. As to quaternary structure, disulfide-bridge linked aggregates.

Its function is as follows. Glutenins are high-molecular weight seed storage proteins of wheat endosperm. Thought to be responsible for the visco-elastic property of wheat dough. This chain is Glutenin, low molecular weight subunit, found in Triticum aestivum (Wheat).